A 20-amino-acid chain; its full sequence is Citrate synthase (20 aa).

Belongs to the citrate synthase family. Homodimer.

It carries out the reaction oxaloacetate + acetyl-CoA + H2O = citrate + CoA + H(+). The protein operates within carbohydrate metabolism; tricarboxylic acid cycle; isocitrate from oxaloacetate: step 1/2. The chain is Citrate synthase from Populus euphratica (Euphrates poplar).